We begin with the raw amino-acid sequence, 304 residues long: Glycine--tRNA ligase alpha subunit (304 aa).

The protein belongs to the class-II aminoacyl-tRNA synthetase family. In terms of assembly, tetramer of two alpha and two beta subunits.

The protein localises to the cytoplasm. The enzyme catalyses tRNA(Gly) + glycine + ATP = glycyl-tRNA(Gly) + AMP + diphosphate. This is Glycine--tRNA ligase alpha subunit from Yersinia pseudotuberculosis serotype O:1b (strain IP 31758).